The following is a 296-amino-acid chain: NADPH-dependent 1-acyldihydroxyacetone phosphate reductase (296 aa).

I9 is an NADP(+) binding site. The short motif at 11–15 is the GXSXG element; that stretch reads GCSEG. T35, R41, D56, N84, K117, Y148, K152, V181, and T183 together coordinate NADP(+). Y148 acts as the Proton donor in catalysis. K152 serves as the catalytic Lowers pKa of active site Tyr.

Belongs to the short-chain dehydrogenases/reductases (SDR) family.

It localises to the lipid droplet. The protein localises to the cytoplasm. It is found in the vacuole. Its subcellular location is the endoplasmic reticulum. The protein resides in the golgi apparatus. It localises to the mitochondrion outer membrane. The catalysed reaction is 1-hexadecanoyl-sn-glycero-3-phosphate + NADP(+) = 1-hexadecanoylglycerone 3-phosphate + NADPH + H(+). The enzyme catalyses a 1-acylglycerone 3-phosphate + NADPH + H(+) = a 1-acyl-sn-glycero-3-phosphate + NADP(+). It catalyses the reaction a triacylglycerol + H2O = a diacylglycerol + a fatty acid + H(+). Can convert acyl and alkyl dihydroxyacetone-phosphate (DHAP) into glycerolipids and ether lipids, respectively. Required for the biosynthesis of phosphatidic acid via the DHAP pathway, where it reduces 1-acyl DHAP to lysophosphatidic acid (LPA). Also has triacylglycerol (TAG) lipase activity. Involved in the mobilization of the non-polar storage lipids triacylglycerols (TAGs) from lipid particles by hydrolysis of TAGs. Lipolysis of TAG by AYR1 is essential for starvation-induced autophagy. Forms an NADPH-regulated cation-selective channel in the mitochondrial outer membrane. The sequence is that of NADPH-dependent 1-acyldihydroxyacetone phosphate reductase (ayr1) from Schizosaccharomyces pombe (strain 972 / ATCC 24843) (Fission yeast).